A 435-amino-acid chain; its full sequence is Xylose isomerase (435 aa).

Active-site residues include H100 and D103. Mg(2+) contacts are provided by E231, E267, H270, D295, D306, D308, and D338.

Belongs to the xylose isomerase family. In terms of assembly, homotetramer. Mg(2+) is required as a cofactor.

It localises to the cytoplasm. The enzyme catalyses alpha-D-xylose = alpha-D-xylulofuranose. The polypeptide is Xylose isomerase (Brucella ovis (strain ATCC 25840 / 63/290 / NCTC 10512)).